Reading from the N-terminus, the 663-residue chain is Translation factor guf1, mitochondrial (663 aa).

A mitochondrion-targeting transit peptide spans 1–51 (MRGCLQVLRWLSTSTARRPVSSRPLHEIFPKSEFRRPFTSTILRQAQASRN). Positions 65–245 (ERFRNFCIVA…TVIERIPAPV (181 aa)) constitute a tr-type G domain. Residues 74–81 (AHVDHGKS), 138–142 (DTPGH), and 192–195 (NKVD) each bind GTP.

Belongs to the TRAFAC class translation factor GTPase superfamily. Classic translation factor GTPase family. LepA subfamily.

It localises to the mitochondrion inner membrane. It carries out the reaction GTP + H2O = GDP + phosphate + H(+). Its function is as follows. Promotes mitochondrial protein synthesis. May act as a fidelity factor of the translation reaction, by catalyzing a one-codon backward translocation of tRNAs on improperly translocated ribosomes. Binds to mitochondrial ribosomes in a GTP-dependent manner. The sequence is that of Translation factor guf1, mitochondrial (guf1) from Talaromyces marneffei (strain ATCC 18224 / CBS 334.59 / QM 7333) (Penicillium marneffei).